The chain runs to 948 residues: Alanine--tRNA ligase (948 aa).

The Zn(2+) site is built by His638, His642, Cys739, and His743.

This sequence belongs to the class-II aminoacyl-tRNA synthetase family. Zn(2+) serves as cofactor.

The protein localises to the cytoplasm. The catalysed reaction is tRNA(Ala) + L-alanine + ATP = L-alanyl-tRNA(Ala) + AMP + diphosphate. Functionally, catalyzes the attachment of alanine to tRNA(Ala) in a two-step reaction: alanine is first activated by ATP to form Ala-AMP and then transferred to the acceptor end of tRNA(Ala). Also edits incorrectly charged Ser-tRNA(Ala) and Gly-tRNA(Ala) via its editing domain. In Paracidovorax citrulli (strain AAC00-1) (Acidovorax citrulli), this protein is Alanine--tRNA ligase.